A 153-amino-acid chain; its full sequence is MTHPLIPQIINLATPIAEDRGLEVVDVVFQTNKRPPVLRVDIRNSQGETSLDDCEAVSRALEAVLDESQVMGGSYVLEISSPGISRQLHSDREFISFKGFAVIVTTEIPYLDHKEWRGQLQGRDESAVYINQKGRAIAIPRELIAKVQLDEHR.

The protein belongs to the RimP family.

The protein resides in the cytoplasm. Functionally, required for maturation of 30S ribosomal subunits. This is Ribosome maturation factor RimP from Rippkaea orientalis (strain PCC 8801 / RF-1) (Cyanothece sp. (strain PCC 8801)).